A 204-amino-acid polypeptide reads, in one-letter code: Cardiotrophin-2 (204 aa).

Residues 1–22 form the signal peptide; it reads MYCLLATPLCLLSLLLPPLSPA. Asn-44 carries N-linked (GlcNAc...) asparagine glycosylation.

The protein belongs to the IL-6 superfamily. As to quaternary structure, binds to tripartite CNTF receptor complex consisting of CNTF alpha chain, LIFR and IL6ST (in vitro). Not detected in adult tissues.

Its subcellular location is the secreted. Increases the platelet count associated with splenomegaly. May have an important role in neuronal precursor development and maturation. The polypeptide is Cardiotrophin-2 (Ctf2) (Mus musculus (Mouse)).